The primary structure comprises 79 residues: Acyl carrier protein (79 aa).

In terms of domain architecture, Carrier spans 2–77 (SEIGERVKKI…DATKFLEKNA (76 aa)). The residue at position 37 (Ser-37) is an O-(pantetheine 4'-phosphoryl)serine.

It belongs to the acyl carrier protein (ACP) family. Post-translationally, 4'-phosphopantetheine is transferred from CoA to a specific serine of apo-ACP by AcpS. This modification is essential for activity because fatty acids are bound in thioester linkage to the sulfhydryl of the prosthetic group.

The protein localises to the cytoplasm. Its pathway is lipid metabolism; fatty acid biosynthesis. Its function is as follows. Carrier of the growing fatty acid chain in fatty acid biosynthesis. The sequence is that of Acyl carrier protein from Nitrobacter winogradskyi (strain ATCC 25391 / DSM 10237 / CIP 104748 / NCIMB 11846 / Nb-255).